Consider the following 128-residue polypeptide: MTIDEIIEAIEKLTVSELAELVKKLEDKFGVTAAAPVAVAAAPVAGAAAGAAQEEKTEFDVVLKSFGQNKIQVIKVVREITGLGLKEAKDLVEKAGSPDAIIKSGVPKQEAEDIKKKLEEAGAEVELK.

Belongs to the bacterial ribosomal protein bL12 family. In terms of assembly, homodimer. Part of the ribosomal stalk of the 50S ribosomal subunit. Forms a multimeric L10(L12)X complex, where L10 forms an elongated spine to which 2 to 4 L12 dimers bind in a sequential fashion. Binds GTP-bound translation factors.

In terms of biological role, forms part of the ribosomal stalk which helps the ribosome interact with GTP-bound translation factors. Is thus essential for accurate translation. In Thermotoga petrophila (strain ATCC BAA-488 / DSM 13995 / JCM 10881 / RKU-1), this protein is Large ribosomal subunit protein bL12.